The primary structure comprises 379 residues: UDP-N-acetylglucosamine--N-acetylmuramyl-(pentapeptide) pyrophosphoryl-undecaprenol N-acetylglucosamine transferase (379 aa).

UDP-N-acetyl-alpha-D-glucosamine is bound by residues 17–19 (TGG), asparagine 128, arginine 169, serine 197, and glutamine 298.

Belongs to the glycosyltransferase 28 family. MurG subfamily.

Its subcellular location is the cell inner membrane. The catalysed reaction is di-trans,octa-cis-undecaprenyl diphospho-N-acetyl-alpha-D-muramoyl-L-alanyl-D-glutamyl-meso-2,6-diaminopimeloyl-D-alanyl-D-alanine + UDP-N-acetyl-alpha-D-glucosamine = di-trans,octa-cis-undecaprenyl diphospho-[N-acetyl-alpha-D-glucosaminyl-(1-&gt;4)]-N-acetyl-alpha-D-muramoyl-L-alanyl-D-glutamyl-meso-2,6-diaminopimeloyl-D-alanyl-D-alanine + UDP + H(+). Its pathway is cell wall biogenesis; peptidoglycan biosynthesis. Cell wall formation. Catalyzes the transfer of a GlcNAc subunit on undecaprenyl-pyrophosphoryl-MurNAc-pentapeptide (lipid intermediate I) to form undecaprenyl-pyrophosphoryl-MurNAc-(pentapeptide)GlcNAc (lipid intermediate II). This is UDP-N-acetylglucosamine--N-acetylmuramyl-(pentapeptide) pyrophosphoryl-undecaprenol N-acetylglucosamine transferase from Brucella melitensis biotype 2 (strain ATCC 23457).